We begin with the raw amino-acid sequence, 273 residues long: Octanoyl-[GcvH]:protein N-octanoyltransferase (273 aa).

In terms of domain architecture, BPL/LPL catalytic spans 40–245; it reads ATEGAAIRSW…SLMELGATLT (206 aa). The Acyl-thioester intermediate role is filled by Cys144.

The protein belongs to the octanoyltransferase LipL family.

It catalyses the reaction N(6)-octanoyl-L-lysyl-[glycine-cleavage complex H protein] + L-lysyl-[lipoyl-carrier protein] = N(6)-octanoyl-L-lysyl-[lipoyl-carrier protein] + L-lysyl-[glycine-cleavage complex H protein]. Its pathway is protein modification; protein lipoylation via endogenous pathway; protein N(6)-(lipoyl)lysine from octanoyl-[acyl-carrier-protein]. In terms of biological role, catalyzes the amidotransfer (transamidation) of the octanoyl moiety from octanoyl-GcvH to the lipoyl domain of the E2 subunit of lipoate-dependent enzymes. The chain is Octanoyl-[GcvH]:protein N-octanoyltransferase from Exiguobacterium sibiricum (strain DSM 17290 / CCUG 55495 / CIP 109462 / JCM 13490 / 255-15).